Reading from the N-terminus, the 203-residue chain is Holliday junction branch migration complex subunit RuvA (203 aa).

Residues 1–64 (MIGRLRGIIL…EDAQLLYGFN (64 aa)) form a domain I region. The domain II stretch occupies residues 65–142 (NKQERTLFKE…KGLHGDLFTP (78 aa)). The flexible linker stretch occupies residues 143–154 (AADLVLTSPAGP). The tract at residues 155–203 (TADDAEQEAVAALVALGYKPQEASRMVSKIARPDANSETLIREALRAAL) is domain III.

This sequence belongs to the RuvA family. In terms of assembly, homotetramer. Forms an RuvA(8)-RuvB(12)-Holliday junction (HJ) complex. HJ DNA is sandwiched between 2 RuvA tetramers; dsDNA enters through RuvA and exits via RuvB. An RuvB hexamer assembles on each DNA strand where it exits the tetramer. Each RuvB hexamer is contacted by two RuvA subunits (via domain III) on 2 adjacent RuvB subunits; this complex drives branch migration. In the full resolvosome a probable DNA-RuvA(4)-RuvB(12)-RuvC(2) complex forms which resolves the HJ.

The protein localises to the cytoplasm. In terms of biological role, the RuvA-RuvB-RuvC complex processes Holliday junction (HJ) DNA during genetic recombination and DNA repair, while the RuvA-RuvB complex plays an important role in the rescue of blocked DNA replication forks via replication fork reversal (RFR). RuvA specifically binds to HJ cruciform DNA, conferring on it an open structure. The RuvB hexamer acts as an ATP-dependent pump, pulling dsDNA into and through the RuvAB complex. HJ branch migration allows RuvC to scan DNA until it finds its consensus sequence, where it cleaves and resolves the cruciform DNA. This chain is Holliday junction branch migration complex subunit RuvA, found in Klebsiella pneumoniae (strain 342).